The sequence spans 313 residues: uncharacterized protein (313 aa).

Helical transmembrane passes span leucine 42–threonine 64 and valine 74–valine 96.

The protein resides in the cell membrane. This is an uncharacterized protein from Treponema pallidum (strain Nichols).